The following is an 86-amino-acid chain: Cytochrome c-555 (86 aa).

Residues Cys-14, Cys-17, His-18, and Met-60 each contribute to the heme c site.

Binds 1 heme c group covalently per subunit.

This basic c-type monoheme cytochrome has been found exclusively in the green photosynthetic bacteria, although its role in bacterial photosynthesis is not established. It has an unusually low redox potential compared with mitochondrial cytochrome c. It is reactive with cytochrome c oxidases but not with reductases. The protein is Cytochrome c-555 of Chlorobaculum thiosulfatiphilum (Chlorobium limicola f.sp. thiosulfatophilum).